We begin with the raw amino-acid sequence, 197 residues long: Peptide deformylase (197 aa).

Cysteine 106 and histidine 148 together coordinate Fe cation. Glutamate 149 is a catalytic residue. Histidine 152 contributes to the Fe cation binding site.

This sequence belongs to the polypeptide deformylase family. Requires Fe(2+) as cofactor.

The enzyme catalyses N-terminal N-formyl-L-methionyl-[peptide] + H2O = N-terminal L-methionyl-[peptide] + formate. Its function is as follows. Removes the formyl group from the N-terminal Met of newly synthesized proteins. Requires at least a dipeptide for an efficient rate of reaction. N-terminal L-methionine is a prerequisite for activity but the enzyme has broad specificity at other positions. This is Peptide deformylase from Mycobacterium bovis (strain ATCC BAA-935 / AF2122/97).